We begin with the raw amino-acid sequence, 1799 residues long: 1,3-beta-glucan synthase component FKS1 (1799 aa).

Residues 1–11 (MSYPNPPPPPK) are compositionally biased toward pro residues. The segment at 1-136 (MSYPNPPPPP…SNAGHRPRDP (136 aa)) is disordered. The span at 12-23 (GSASFSSSSSDP) shows a compositional bias: low complexity. A compositionally biased stretch (gly residues) spans 51–64 (GAGGAGVAPPGQGG). Positions 91–101 (ASESGWSQNEP) are enriched in polar residues. Transmembrane regions (helical) follow at residues 431 to 451 (IWVL…PSIY), 470 to 490 (LGGF…FSYI), 504 to 524 (LIFL…IAFF), 530 to 550 (VALI…IAFA), 591 to 611 (FLLW…FLTL), 648 to 668 (VMFV…YVIW), 1268 to 1288 (NILV…LGTL), 1323 to 1343 (CIIS…VQEL), 1422 to 1442 (LVLL…YFWI), 1446 to 1466 (GLCV…DFII), 1527 to 1547 (IGEI…YLFI), 1563 to 1583 (IAII…TLFL), 1605 to 1625 (ALAH…LWFL), 1635 to 1655 (LGII…IAVF), 1704 to 1724 (DFIA…IPYF), and 1762 to 1782 (GLLY…PIIF).

Belongs to the glycosyltransferase 48 family. In terms of assembly, component of the 1,3-beta-glucan synthase (GS) complex composed of a catalytic subunit FKS1 and a regulatory subunit RHO1.

It localises to the cell membrane. It carries out the reaction [(1-&gt;3)-beta-D-glucosyl](n) + UDP-alpha-D-glucose = [(1-&gt;3)-beta-D-glucosyl](n+1) + UDP + H(+). With respect to regulation, activated by magnesium ions. Inhibited by caspofungin and cilofungin. Functionally, catalytic subunit of the 1,3-beta-glucan synthase (GS) complex. Synthesizes 1,3-beta-glucan, a major structural component of the yeast cell wall. Involved in cell wall synthesis, maintenance and remodeling. This is 1,3-beta-glucan synthase component FKS1 from Cryptococcus neoformans var. grubii serotype A (strain H99 / ATCC 208821 / CBS 10515 / FGSC 9487) (Filobasidiella neoformans var. grubii).